The primary structure comprises 238 residues: Ribonuclease PH (238 aa).

Phosphate-binding positions include arginine 86 and 124–126 (GTR).

Belongs to the RNase PH family. In terms of assembly, homohexameric ring arranged as a trimer of dimers.

It catalyses the reaction tRNA(n+1) + phosphate = tRNA(n) + a ribonucleoside 5'-diphosphate. Its function is as follows. Phosphorolytic 3'-5' exoribonuclease that plays an important role in tRNA 3'-end maturation. Removes nucleotide residues following the 3'-CCA terminus of tRNAs; can also add nucleotides to the ends of RNA molecules by using nucleoside diphosphates as substrates, but this may not be physiologically important. Probably plays a role in initiation of 16S rRNA degradation (leading to ribosome degradation) during starvation. In Azorhizobium caulinodans (strain ATCC 43989 / DSM 5975 / JCM 20966 / LMG 6465 / NBRC 14845 / NCIMB 13405 / ORS 571), this protein is Ribonuclease PH.